We begin with the raw amino-acid sequence, 240 residues long: UDP-2,3-diacylglucosamine hydrolase (240 aa).

5 residues coordinate Mn(2+): D8, H10, D41, N79, and H114. 79-80 lines the substrate pocket; it reads NR. D122, S160, N164, K167, and H195 together coordinate substrate. Residues H195 and H197 each contribute to the Mn(2+) site.

This sequence belongs to the LpxH family. Mn(2+) is required as a cofactor.

Its subcellular location is the cell inner membrane. It carries out the reaction UDP-2-N,3-O-bis[(3R)-3-hydroxytetradecanoyl]-alpha-D-glucosamine + H2O = 2-N,3-O-bis[(3R)-3-hydroxytetradecanoyl]-alpha-D-glucosaminyl 1-phosphate + UMP + 2 H(+). It functions in the pathway glycolipid biosynthesis; lipid IV(A) biosynthesis; lipid IV(A) from (3R)-3-hydroxytetradecanoyl-[acyl-carrier-protein] and UDP-N-acetyl-alpha-D-glucosamine: step 4/6. In terms of biological role, hydrolyzes the pyrophosphate bond of UDP-2,3-diacylglucosamine to yield 2,3-diacylglucosamine 1-phosphate (lipid X) and UMP by catalyzing the attack of water at the alpha-P atom. Involved in the biosynthesis of lipid A, a phosphorylated glycolipid that anchors the lipopolysaccharide to the outer membrane of the cell. The sequence is that of UDP-2,3-diacylglucosamine hydrolase from Salmonella arizonae (strain ATCC BAA-731 / CDC346-86 / RSK2980).